The sequence spans 815 residues: TBC1 domain family member 5 (815 aa).

Ser44 carries the post-translational modification Phosphoserine. The tract at residues 56–64 is required for interaction with retromer; involved in interaction with ATG8 family proteins; sequence MKEWEELFV. Residues 57–62 carry the LIR 1 motif; sequence KEWEEL. In terms of domain architecture, Rab-GAP TBC spans 81 to 359; sequence LRSSRFRSIC…VVWDALFADS (279 aa). Arg448 bears the Asymmetric dimethylarginine; alternate mark. Arg448 carries the post-translational modification Omega-N-methylarginine; alternate. Phosphoserine is present on Ser460. The disordered stretch occupies residues 475–591; it reads PGSMGGPVPG…SATKKDSFFS (117 aa). Low complexity-rich tracts occupy residues 483–492 and 510–539; these read PGNNSSSSFS and QQQQ…QQQQ. Phosphoserine is present on residues Ser546, Ser563, Ser565, Ser568, Ser578, and Ser608. Low complexity predominate over residues 556–568; that stretch reads SSKTISSSPSIES. Disordered stretches follow at residues 702–733 and 754–815; these read SGQD…PDDF and QPLL…PLDI. Positions 754 to 765 are enriched in polar residues; the sequence is QPLLTLRSTSGK. Low complexity predominate over residues 783–796; it reads PASASASSSNPSSS. Residues 805 to 809 carry the LIR 2 motif; it reads SGFTI. The segment at 806 to 811 is required for interaction with ATG8 family proteins; it reads GFTIVS. Residue Ser811 is modified to Phosphoserine.

In terms of assembly, interacts with MAP1LC3A, MAP1LC3B, MAP1LC3C, GABARAP, GABARAPL1, GABARAPL2. Interacts with VPS29 and VPS35; indicative for an association with retromer CSC subcomplex. MAP1LC3A and VPS29 compete for binding to TBC1D5. Interacts with AP2M1; indicative for an association with the AP2 complex. Interacts with ULK1 and ATG13 (phosphorylated); indicative for an association with the activated ULK1-ATG13-FIP200 complex. Interacts with ATG9A; the interactions seems to be restricted to the AP2-clathrin-associated fraction of ATG9A.

It is found in the endosome membrane. The protein resides in the cytoplasmic vesicle. Its subcellular location is the autophagosome. Its function is as follows. May act as a GTPase-activating protein for Rab family protein(s). May act as a GAP for RAB7A. Can displace RAB7A and retromer CSC subcomplex from the endosomal membrane to the cytosol; at least retromer displacement seems to require its catalytic activity. Required for retrograde transport of cargo proteins from endosomes to the trans-Golgi network (TGN); the function seems to require its catalytic activity. Involved in regulation of autophagy. May act as a molecular switch between endosomal and autophagosomal transport and is involved in reprogramming vesicle trafficking upon autophagy induction. Involved in the trafficking of ATG9A upon activation of autophagy. May regulate the recruitment of ATG9A-AP2-containing vesicles to autophagic membranes. This chain is TBC1 domain family member 5 (Tbc1d5), found in Mus musculus (Mouse).